The primary structure comprises 212 residues: Thymidylate kinase (212 aa).

7–14 (GGEGCGKT) provides a ligand contact to ATP.

The protein belongs to the thymidylate kinase family.

It carries out the reaction dTMP + ATP = dTDP + ADP. In terms of biological role, phosphorylation of dTMP to form dTDP in both de novo and salvage pathways of dTTP synthesis. The sequence is that of Thymidylate kinase from Gloeobacter violaceus (strain ATCC 29082 / PCC 7421).